Reading from the N-terminus, the 477-residue chain is Monocarboxylate transporter 12-B (477 aa).

Over 1–9 (MAQEKKKGG) the chain is Cytoplasmic. A run of 12 helical transmembrane segments spans residues 10–30 (VLPPDGGWGWMIVAGCFVVTV), 58–78 (AWIHSLVDCTTMLCAPLGSLI), 86–106 (IAVILGGFLASVGLVLSSFAT), 116–136 (GLLTGLGFALCYTPAIAMVGI), 148–168 (IAMSGSGIGTFILAPVVQLLI), 178–198 (LILGGFVLNLCVCGALLRPII), 253–273 (FLVLAGSFLLLASGCSLPFVY), 289–309 (AFLMSILGVIDIVGNITFGWL), 320–340 (NICYMFAVGMEGLCCLFIPLL), 344–364 (VWLVPFSVLYGYFDGAYVALI), 383–403 (VVYFLHAVPYLVSPPIGGWLV), and 413–433 (FFLSGFALISSSLLLFSVAII). Topologically, residues 434–477 (RYCQRNQKKNSLSKIPKLVSCEGKQVDYYPPKNKDLMLIIPATS) are cytoplasmic.

This sequence belongs to the major facilitator superfamily. Monocarboxylate porter (TC 2.A.1.13) family.

The protein localises to the cell membrane. It localises to the basolateral cell membrane. It catalyses the reaction creatine(in) = creatine(out). The enzyme catalyses guanidinoacetate(in) = guanidinoacetate(out). Functions as a transporter for creatine and as well for its precursor guanidinoacetate. Transport of creatine and GAA is independent of resting membrane potential and extracellular Na(+), Cl(-), or pH. Contributes to the process of creatine biosynthesis and distribution. In Danio rerio (Zebrafish), this protein is Monocarboxylate transporter 12-B (slc16a12b).